A 733-amino-acid polypeptide reads, in one-letter code: uncharacterized protein (733 aa).

Residues 174–194 (WAVMILASLRPELFGPIIIAG) traverse the membrane as a helical segment.

It localises to the membrane. This is an uncharacterized protein from Rhizobium meliloti (Ensifer meliloti).